The sequence spans 126 residues: Phosphoribosyl-AMP cyclohydrolase (126 aa).

Aspartate 76 serves as a coordination point for Mg(2+). Cysteine 77 provides a ligand contact to Zn(2+). Mg(2+)-binding residues include aspartate 78 and aspartate 80. Zn(2+)-binding residues include cysteine 94 and cysteine 101.

It belongs to the PRA-CH family. In terms of assembly, homodimer. The cofactor is Mg(2+). Zn(2+) is required as a cofactor.

It is found in the cytoplasm. It carries out the reaction 1-(5-phospho-beta-D-ribosyl)-5'-AMP + H2O = 1-(5-phospho-beta-D-ribosyl)-5-[(5-phospho-beta-D-ribosylamino)methylideneamino]imidazole-4-carboxamide. Its pathway is amino-acid biosynthesis; L-histidine biosynthesis; L-histidine from 5-phospho-alpha-D-ribose 1-diphosphate: step 3/9. Functionally, catalyzes the hydrolysis of the adenine ring of phosphoribosyl-AMP. This Vesicomyosocius okutanii subsp. Calyptogena okutanii (strain HA) protein is Phosphoribosyl-AMP cyclohydrolase.